Here is a 297-residue protein sequence, read N- to C-terminus: E3 ubiquitin-protein ligase RNF212B (297 aa).

The RING-type zinc-finger motif lies at Cys-6 to Gly-40. Residues Leu-87 to Gly-136 adopt a coiled-coil conformation. Disordered stretches follow at residues Val-152–Ser-179 and Arg-198–Pro-269. Over residues Pro-163–Ser-179 the composition is skewed to low complexity. A compositionally biased stretch (polar residues) spans Pro-206–Gly-234.

Homodimer. Autoubiquitinated.

Its subcellular location is the chromosome. The catalysed reaction is S-ubiquitinyl-[E2 ubiquitin-conjugating enzyme]-L-cysteine + [acceptor protein]-L-lysine = [E2 ubiquitin-conjugating enzyme]-L-cysteine + N(6)-ubiquitinyl-[acceptor protein]-L-lysine.. The protein operates within protein modification; protein ubiquitination. Its function is as follows. Ubiquitin E3 ligase that acts as a crucial factor for crossing-over (CO) formation during meiosis. Essential for normal prophase I progression and for ensuring appropriate CO designation in meiosis. Recruits key components of the cross-over machinery either directly ou indirectly, leading to the activation of the MutL-gamma complex. The function of RNF212B in CO designation is dependent on its catalytic activity. The chain is E3 ubiquitin-protein ligase RNF212B (Rnf212b) from Mus musculus (Mouse).